Here is a 220-residue protein sequence, read N- to C-terminus: FMN-dependent NADH:quinone oxidoreductase 1 (220 aa).

An FMN-binding site is contributed by 18-20 (SVS).

Belongs to the azoreductase type 1 family. Homodimer. It depends on FMN as a cofactor.

It catalyses the reaction 2 a quinone + NADH + H(+) = 2 a 1,4-benzosemiquinone + NAD(+). The enzyme catalyses N,N-dimethyl-1,4-phenylenediamine + anthranilate + 2 NAD(+) = 2-(4-dimethylaminophenyl)diazenylbenzoate + 2 NADH + 2 H(+). Its function is as follows. Quinone reductase that provides resistance to thiol-specific stress caused by electrophilic quinones. Functionally, also exhibits azoreductase activity. Catalyzes the reductive cleavage of the azo bond in aromatic azo compounds to the corresponding amines. This Bacillus anthracis protein is FMN-dependent NADH:quinone oxidoreductase 1.